Consider the following 100-residue polypeptide: Small ribosomal subunit protein uS14c (100 aa).

It belongs to the universal ribosomal protein uS14 family. In terms of assembly, part of the 30S ribosomal subunit.

It is found in the plastid. Functionally, binds 16S rRNA, required for the assembly of 30S particles. In Cuscuta reflexa (Southern Asian dodder), this protein is Small ribosomal subunit protein uS14c (rps14).